We begin with the raw amino-acid sequence, 190 residues long: GTP cyclohydrolase 1 (190 aa).

Zn(2+)-binding residues include C75, H78, and C146.

It belongs to the GTP cyclohydrolase I family. In terms of assembly, toroid-shaped homodecamer, composed of two pentamers of five dimers.

It catalyses the reaction GTP + H2O = 7,8-dihydroneopterin 3'-triphosphate + formate + H(+). It functions in the pathway cofactor biosynthesis; 7,8-dihydroneopterin triphosphate biosynthesis; 7,8-dihydroneopterin triphosphate from GTP: step 1/1. This chain is GTP cyclohydrolase 1, found in Campylobacter curvus (strain 525.92).